The chain runs to 269 residues: Regulatory protein RecX (269 aa).

Belongs to the RecX family.

The protein resides in the cytoplasm. Modulates RecA activity. The chain is Regulatory protein RecX from Lactococcus lactis subsp. cremoris (strain MG1363).